The primary structure comprises 361 residues: Peptide chain release factor 1 (361 aa).

The residue at position 236 (glutamine 236) is an N5-methylglutamine. A compositionally biased stretch (basic and acidic residues) spans 285-309 (NAKDSARAADRKAQVGSGDRSERIR). Residues 285–312 (NAKDSARAADRKAQVGSGDRSERIRTYN) form a disordered region.

Belongs to the prokaryotic/mitochondrial release factor family. Methylated by PrmC. Methylation increases the termination efficiency of RF1.

Its subcellular location is the cytoplasm. Peptide chain release factor 1 directs the termination of translation in response to the peptide chain termination codons UAG and UAA. This Methylobacterium radiotolerans (strain ATCC 27329 / DSM 1819 / JCM 2831 / NBRC 15690 / NCIMB 10815 / 0-1) protein is Peptide chain release factor 1.